The primary structure comprises 368 residues: Propane 2-monooxygenase, hydroxylase component small subunit (368 aa).

The interval 1–33 (MSAPAQPRERSFPSIEFTDAEADAREFPSSRSR) is disordered.

It belongs to the TmoE/XamoE family. In terms of assembly, the propane 2-monooxygenase multicomponent enzyme system is composed of an electron transfer component and a monooxygenase component interacting with the effector protein PrmD. The electron transfer component is composed of a reductase (PrmB), and the monooxygenase component is formed by a large subunit (PrmA) and a small subunit (PrmC). Probably requires the presence of the chaperonin-like protein PrmG to ensure a productive folding, resulting of a soluble PrmC, which leads to the active form of PrmABCD.

It catalyses the reaction propane + NADH + O2 + H(+) = propan-2-ol + NAD(+) + H2O. It carries out the reaction phenol + NADH + O2 + H(+) = hydroquinone + NAD(+) + H2O. Functionally, component of the propane 2-monooxygenase multicomponent enzyme system which is involved in the degradation of propane via the O2-dependent hydroxylation of propane. Under acetone induction, also able to catalyze the oxidation of phenol to yield hydroquinone. This is Propane 2-monooxygenase, hydroxylase component small subunit from Gordonia sp. (strain TY-5).